The sequence spans 863 residues: Paramyosin (863 aa).

The segment at 1-26 (MSESHVKISRTIIRGTSPSTVRLESP) is nonhelical region. A coiled-coil region spans residues 27 to 836 (VRELEDLLDL…ERTITIKRTI (810 aa)). Residues 837 to 863 (GGPGSRAVSVVREINSVSRGNRATSIM) are nonhelical region.

Belongs to the paramyosin family. Homodimer.

Its subcellular location is the cytoplasm. It localises to the myofibril. In terms of biological role, paramyosin is a major structural component of many thick filaments isolated from invertebrate muscles. This Echinococcus granulosus (Hydatid tapeworm) protein is Paramyosin.